Consider the following 517-residue polypeptide: Transcription factor MTB3 (517 aa).

Positions 290-331 (GNSSNGYRSDEGEGKLYKEELDERKPRKRGRKPANGREEALN) are disordered. Over residues 297–314 (RSDEGEGKLYKEELDERK) the composition is skewed to basic and acidic residues. The interval 327 to 340 (EEALNHVEAERQRR) is basic motif; degenerate. In terms of domain architecture, bHLH spans 327-376 (EEALNHVEAERQRREKLNQRFYALRAVVPNISKMDKASLLGDAIAYITDL). A helix-loop-helix motif region spans residues 341–376 (EKLNQRFYALRAVVPNISKMDKASLLGDAIAYITDL).

It is found in the nucleus. In terms of biological role, transcription factor that negatively regulates jasmonate (JA) signaling. Negatively regulates JA-dependent response to wounding, JA-induced expression of defense genes, JA-dependent responses against herbivorous insects, and JA-dependent resistance against Botrytis cinerea infection. Plays a positive role in resistance against the bacterial pathogen Pseudomonas syringae pv tomato DC3000. This chain is Transcription factor MTB3, found in Solanum lycopersicum (Tomato).